We begin with the raw amino-acid sequence, 62 residues long: Photosystem II reaction center protein Z (62 aa).

Helical transmembrane passes span 8–28 (ALAA…VAYA) and 41–61 (FLGS…NFLV).

Belongs to the PsbZ family. PSII is composed of 1 copy each of membrane proteins PsbA, PsbB, PsbC, PsbD, PsbE, PsbF, PsbH, PsbI, PsbJ, PsbK, PsbL, PsbM, PsbT, PsbX, PsbY, PsbZ, Psb30/Ycf12, peripheral proteins PsbO, CyanoQ (PsbQ), PsbU, PsbV and a large number of cofactors. It forms dimeric complexes.

It is found in the cellular thylakoid membrane. Its function is as follows. May control the interaction of photosystem II (PSII) cores with the light-harvesting antenna, regulates electron flow through the 2 photosystem reaction centers. PSII is a light-driven water plastoquinone oxidoreductase, using light energy to abstract electrons from H(2)O, generating a proton gradient subsequently used for ATP formation. In Cyanothece sp. (strain PCC 7425 / ATCC 29141), this protein is Photosystem II reaction center protein Z.